Reading from the N-terminus, the 1104-residue chain is Carbamoyl phosphate synthase large chain (1104 aa).

The carboxyphosphate synthetic domain stretch occupies residues 1 to 402; it reads MPRRTDLKSV…ALQKALRSTE (402 aa). The ATP site is built by Arg129, Arg169, Gly175, Gly176, Glu208, Ile210, Glu215, Gly241, Val242, His243, Gln285, and Glu299. Residues 133-328 enclose the ATP-grasp 1 domain; the sequence is KGVVERCGAE…IAKIAARLAV (196 aa). Gln285, Glu299, and Asn301 together coordinate Mg(2+). Positions 285, 299, and 301 each coordinate Mn(2+). Positions 403 to 547 are oligomerization domain; the sequence is KRGATFSWAG…YSSYDEEDET (145 aa). The interval 548–948 is carbamoyl phosphate synthetic domain; sequence RPREKAAIVI…AFGKSQTAAY (401 aa). Residues 676-867 form the ATP-grasp 2 domain; it reads GQVLERAGLV…LAKAAARLMA (192 aa). Residues Arg712, Arg751, Leu753, Glu758, Gly783, Ile784, His785, Ser786, Gln826, and Glu838 each coordinate ATP. Mg(2+)-binding residues include Gln826, Glu838, and Asn840. Mn(2+) is bound by residues Gln826, Glu838, and Asn840. The region spanning 949-1099 is the MGS-like domain; that stretch reads GGLPTAGTAF…QEHTARLNAA (151 aa). Residues 949 to 1104 are allosteric domain; it reads GGLPTAGTAF…RLNAAWEGRA (156 aa).

It belongs to the CarB family. In terms of assembly, composed of two chains; the small (or glutamine) chain promotes the hydrolysis of glutamine to ammonia, which is used by the large (or ammonia) chain to synthesize carbamoyl phosphate. Tetramer of heterodimers (alpha,beta)4. Mg(2+) serves as cofactor. It depends on Mn(2+) as a cofactor.

The catalysed reaction is hydrogencarbonate + L-glutamine + 2 ATP + H2O = carbamoyl phosphate + L-glutamate + 2 ADP + phosphate + 2 H(+). It catalyses the reaction hydrogencarbonate + NH4(+) + 2 ATP = carbamoyl phosphate + 2 ADP + phosphate + 2 H(+). Its pathway is amino-acid biosynthesis; L-arginine biosynthesis; carbamoyl phosphate from bicarbonate: step 1/1. The protein operates within pyrimidine metabolism; UMP biosynthesis via de novo pathway; (S)-dihydroorotate from bicarbonate: step 1/3. Large subunit of the glutamine-dependent carbamoyl phosphate synthetase (CPSase). CPSase catalyzes the formation of carbamoyl phosphate from the ammonia moiety of glutamine, carbonate, and phosphate donated by ATP, constituting the first step of 2 biosynthetic pathways, one leading to arginine and/or urea and the other to pyrimidine nucleotides. The large subunit (synthetase) binds the substrates ammonia (free or transferred from glutamine from the small subunit), hydrogencarbonate and ATP and carries out an ATP-coupled ligase reaction, activating hydrogencarbonate by forming carboxy phosphate which reacts with ammonia to form carbamoyl phosphate. This chain is Carbamoyl phosphate synthase large chain, found in Kineococcus radiotolerans (strain ATCC BAA-149 / DSM 14245 / SRS30216).